The chain runs to 305 residues: Transcriptional activator protein PfeR (305 aa).

A Response regulatory domain is found at 79-192 (RLLLVEDDPR…ELDARTDALL (114 aa)). Asp-128 bears the 4-aspartylphosphate mark. Residues 200–301 (LPLAQRRDTR…VRGQGYLLVE (102 aa)) constitute a DNA-binding region (ompR/PhoB-type).

In terms of processing, phosphorylated by PfeS.

The protein localises to the cytoplasm. Functionally, member of the two-component regulatory system PfeR/PfeS. Activates expression of the ferric enterobactin receptor. This Pseudomonas aeruginosa (strain ATCC 15692 / DSM 22644 / CIP 104116 / JCM 14847 / LMG 12228 / 1C / PRS 101 / PAO1) protein is Transcriptional activator protein PfeR (pfeR).